The following is a 564-amino-acid chain: Putative zinc metalloproteinase in scaA 5'region (564 aa).

A Peptidase M13 domain is found at 1 to 564 (MTRLQDDFYD…KEADFSAEEF (564 aa)). His-478 serves as a coordination point for Zn(2+). Residue Glu-479 is part of the active site. Zn(2+) is bound by residues His-482 and Glu-538. Asp-542 (proton donor) is an active-site residue.

The protein belongs to the peptidase M13 family. Requires Zn(2+) as cofactor.

The chain is Putative zinc metalloproteinase in scaA 5'region from Streptococcus gordonii (strain Challis / ATCC 35105 / BCRC 15272 / CH1 / DL1 / V288).